Consider the following 222-residue polypeptide: Cysteine protease inhibitor 9 (222 aa).

Residues 1–26 (MKSINILSFLLLSSTLSLVAFARSFS) form the signal peptide. The propeptide occupies 27 to 42 (SENPIVLPSTCHDDDN). The short motif at 29-34 (NPIVLP) is the Vacuolar targeting signal element. Disulfide bonds link Cys-84/Cys-136 and Cys-185/Cys-191.

Belongs to the protease inhibitor I3 (leguminous Kunitz-type inhibitor) family. As to expression, tuber.

Its subcellular location is the vacuole. Functionally, putative inhibitor of cysteine proteases. Does not inhibit papain. May protect the plant by inhibiting proteases of invading organisms. This Solanum tuberosum (Potato) protein is Cysteine protease inhibitor 9.